We begin with the raw amino-acid sequence, 231 residues long: Putative carboxymethylenebutenolidase (231 aa).

Catalysis depends on residues Cys118, Asp167, and His199.

This sequence belongs to the dienelactone hydrolase family.

It catalyses the reaction 2-(5-oxo-2,5-dihydrofuran-2-ylidene)acetate + H2O = 4-oxohex-2-enedioate + H(+). This is Putative carboxymethylenebutenolidase from Aquifex aeolicus (strain VF5).